We begin with the raw amino-acid sequence, 600 residues long: CTP synthase (600 aa).

The Glutamine amidotransferase type-1 domain occupies 304–570 (TIVLVGKYTH…IQSGEEVEWS (267 aa)). Catalysis depends on for GATase activity residues Cys-403, His-532, and Glu-534.

Belongs to the CTP synthase family.

The catalysed reaction is UTP + L-glutamine + ATP + H2O = CTP + L-glutamate + ADP + phosphate + 2 H(+). It functions in the pathway pyrimidine metabolism; CTP biosynthesis via de novo pathway; CTP from UDP: step 2/2. Catalyzes the ATP-dependent amination of UTP to CTP with either L-glutamine or ammonia as the source of nitrogen. This Schizosaccharomyces pombe (strain 972 / ATCC 24843) (Fission yeast) protein is CTP synthase (ura7).